Here is a 506-residue protein sequence, read N- to C-terminus: Heat stress transcription factor A-1 (506 aa).

Positions 157–207 (MEEEIEMLKRDKNVLMQELVRLRQQQQTTDHQLQTLGKRLQGMEQRQQQMM) form a coiled coil. The interval 164-214 (LKRDKNVLMQELVRLRQQQQTTDHQLQTLGKRLQGMEQRQQQMMSFLAKAM) is hydrophobic repeat HR-A/B. The disordered stretch occupies residues 231–254 (RRRIVASNKKRRLPKQDGSLDSES). The span at 232–243 (RRIVASNKKRRL) shows a compositional bias: basic residues. The Nuclear localization signal signature appears at 239-242 (KKRR). The AHA motif lies at 449-456 (DSFWEQFL).

Belongs to the HSF family. Class A subfamily. Homotrimer. In terms of processing, exhibits temperature-dependent phosphorylation.

The protein resides in the nucleus. Transcriptional regulator that specifically binds DNA of heat shock promoter elements (HSE). The chain is Heat stress transcription factor A-1 (HSFA1) from Oryza sativa subsp. japonica (Rice).